The chain runs to 73 residues: uncharacterized protein (73 aa).

The next 2 helical transmembrane spans lie at 7–27 and 47–67; these read LFSSLTFSLTVLFLLLLIPNL and YFGYPSLGILFAGILSPIIIL.

It localises to the cell membrane. This is an uncharacterized protein from Methanocaldococcus jannaschii (strain ATCC 43067 / DSM 2661 / JAL-1 / JCM 10045 / NBRC 100440) (Methanococcus jannaschii).